A 346-amino-acid polypeptide reads, in one-letter code: Thioredoxin domain-containing protein R362 (346 aa).

Residues 212–345 (LTNLSNTEAN…IVKFIDETMS (134 aa)) enclose the Thioredoxin domain.

It localises to the virion. This chain is Thioredoxin domain-containing protein R362, found in Acanthamoeba polyphaga (Amoeba).